The sequence spans 338 residues: MKVFYDKDCDLSLVKGKTVAIIGYGSQGHAHALNLHDSGVKVVVGLRKGGASWNKAANAGLEVKEVAEAVKVADVVMMLLPDENIAAVYRNEVHANIKAGAALAFAHGFNVHYGQVVPRDDIDVIMIAPKAPGHTVRSTYTQGGGVPHLVAVHQDKSGSARDVALSYASANGGGRAGIIETDFREETETDLFGEQAVLCGGTVELIKAGFDTLVEAGYAPEMAYFECLHELKLIVDLIYEGGIANMNYSISNNAEFGEYETGPKIVTEQTRQAMRDALVAIQTGEYAKKFILENAAGAPTLTSRRRINAESQIEQVGGKLRAMMPWIAANKLVDKSKN.

Positions M1–T181 constitute a KARI N-terminal Rossmann domain. Residues Y24 to Q27, R47, and S52 each bind NADP(+). H107 is a catalytic residue. G133 serves as a coordination point for NADP(+). Residues D182 to I327 enclose the KARI C-terminal knotted domain. Positions 190, 194, 226, and 230 each coordinate Mg(2+). S251 is a binding site for substrate.

This sequence belongs to the ketol-acid reductoisomerase family. The cofactor is Mg(2+).

The catalysed reaction is (2R)-2,3-dihydroxy-3-methylbutanoate + NADP(+) = (2S)-2-acetolactate + NADPH + H(+). It carries out the reaction (2R,3R)-2,3-dihydroxy-3-methylpentanoate + NADP(+) = (S)-2-ethyl-2-hydroxy-3-oxobutanoate + NADPH + H(+). It participates in amino-acid biosynthesis; L-isoleucine biosynthesis; L-isoleucine from 2-oxobutanoate: step 2/4. It functions in the pathway amino-acid biosynthesis; L-valine biosynthesis; L-valine from pyruvate: step 2/4. Its function is as follows. Involved in the biosynthesis of branched-chain amino acids (BCAA). Catalyzes an alkyl-migration followed by a ketol-acid reduction of (S)-2-acetolactate (S2AL) to yield (R)-2,3-dihydroxy-isovalerate. In the isomerase reaction, S2AL is rearranged via a Mg-dependent methyl migration to produce 3-hydroxy-3-methyl-2-ketobutyrate (HMKB). In the reductase reaction, this 2-ketoacid undergoes a metal-dependent reduction by NADPH to yield (R)-2,3-dihydroxy-isovalerate. The chain is Ketol-acid reductoisomerase (NADP(+)) from Bordetella petrii (strain ATCC BAA-461 / DSM 12804 / CCUG 43448).